Consider the following 442-residue polypeptide: Trigger factor (442 aa).

Residues 175 to 258 (GDFISISLHV…VNAVIEVSIP (84 aa)) form the PPIase FKBP-type domain.

It belongs to the FKBP-type PPIase family. Tig subfamily.

The protein localises to the cytoplasm. It carries out the reaction [protein]-peptidylproline (omega=180) = [protein]-peptidylproline (omega=0). Involved in protein export. Acts as a chaperone by maintaining the newly synthesized protein in an open conformation. Functions as a peptidyl-prolyl cis-trans isomerase. The chain is Trigger factor (tig) from Chlamydia pneumoniae (Chlamydophila pneumoniae).